The chain runs to 558 residues: Dihydroxy-acid dehydratase (558 aa).

D81 is a binding site for Mg(2+). C122 is a [2Fe-2S] cluster binding site. Residues D123 and K124 each contribute to the Mg(2+) site. An N6-carboxylysine modification is found at K124. Residue C195 coordinates [2Fe-2S] cluster. Residue E447 coordinates Mg(2+). The Proton acceptor role is filled by S473.

The protein belongs to the IlvD/Edd family. In terms of assembly, homodimer. It depends on [2Fe-2S] cluster as a cofactor. Mg(2+) is required as a cofactor.

It carries out the reaction (2R)-2,3-dihydroxy-3-methylbutanoate = 3-methyl-2-oxobutanoate + H2O. The enzyme catalyses (2R,3R)-2,3-dihydroxy-3-methylpentanoate = (S)-3-methyl-2-oxopentanoate + H2O. The protein operates within amino-acid biosynthesis; L-isoleucine biosynthesis; L-isoleucine from 2-oxobutanoate: step 3/4. Its pathway is amino-acid biosynthesis; L-valine biosynthesis; L-valine from pyruvate: step 3/4. In terms of biological role, functions in the biosynthesis of branched-chain amino acids. Catalyzes the dehydration of (2R,3R)-2,3-dihydroxy-3-methylpentanoate (2,3-dihydroxy-3-methylvalerate) into 2-oxo-3-methylpentanoate (2-oxo-3-methylvalerate) and of (2R)-2,3-dihydroxy-3-methylbutanoate (2,3-dihydroxyisovalerate) into 2-oxo-3-methylbutanoate (2-oxoisovalerate), the penultimate precursor to L-isoleucine and L-valine, respectively. This is Dihydroxy-acid dehydratase from Bacillus pumilus (strain SAFR-032).